A 189-amino-acid chain; its full sequence is Interleukin-23 subunit alpha (189 aa).

An N-terminal signal peptide occupies residues Met-1–Thr-19.

This sequence belongs to the IL-6 superfamily. In terms of assembly, heterodimer with IL12B; disulfide-linked. The heterodimer is known as interleukin IL-23. Interacts with IL23R; this interaction enables recruitment of IL12RB1.

The protein localises to the secreted. In terms of biological role, associates with IL12B to form the pro-inflammatory cytokine IL-23 that plays different roles in innate and adaptive immunity. Released by antigen-presenting cells such as dendritic cells or macrophages, binds to a heterodimeric receptor complex composed of IL12RB1 and IL23R to activate JAK2 and TYK2 which then phosphorylate the receptor to form a docking site leading to the phosphorylation of STAT3 and STAT4. This process leads to activation of several pathways including p38 MAPK or NF-kappa-B and promotes the production of pro-inflammatory cytokines such as interleukin-17A/IL17A. In turn, participates in the early and effective intracellular bacterial clearance. Promotes the expansion and survival of T-helper 17 cells, a CD4-positive helper T-cell subset that produces IL-17, as well as other IL-17-producing cells. The polypeptide is Interleukin-23 subunit alpha (IL23A) (Cavia porcellus (Guinea pig)).